A 1466-amino-acid polypeptide reads, in one-letter code: Collagen alpha-1(III) chain (1466 aa).

A signal peptide spans 1–23 (MMSFVQKGSWLLLALLHPTIILA). Positions 24–153 (QQEAVEGGCS…CPTGPQNYSP (130 aa)) are cleaved as a propeptide — N-terminal propeptide. Positions 30 to 89 (GGCSHLGQSYADRDVWKPEPCQICVCDSGSVLCDDIICDDQELDCPNPEIPFGECCAVCP) constitute a VWFC domain. Residues 95–1194 (PTRPPNGQGP…GPPGPPGAPG (1100 aa)) form a disordered region. Residues 99 to 108 (PNGQGPQGPK) show a composition bias toward low complexity. Over residues 146-155 (TGPQNYSPQY) the composition is skewed to polar residues. Positions 149 to 167 (QNYSPQYDSYDVKSGVAVG) are nonhelical region (N-terminal). Positions 168–1196 (GLAGYPGPAG…PGPPGAPGPC (1029 aa)) are triple-helical region. P173, P179, P182, P185, P191, P194, P197, P203, P206, P215, P218, P236, P239, P245, P248, P257, and P260 each carry 4-hydroxyproline. Pro residues predominate over residues 175–185 (PAGPPGPPGPP). Positions 187–199 (TSGHPGSPGSPGY) are enriched in low complexity. Over residues 229 to 241 (KDGESGRPGRPGE) the composition is skewed to basic and acidic residues. Positions 251–260 (KGPAGIPGFP) are enriched in low complexity. Position 263 is a 5-hydroxylysine; alternate (K263). Residue K263 is glycosylated (O-linked (Gal...) hydroxylysine; alternate). Residues 266 to 277 (RGFDGRNGEKGE) are compositionally biased toward basic and acidic residues. 4-hydroxyproline is present on P281. K284 is modified (5-hydroxylysine). P290, P296, P305, P311, P314, P332, P335, P338, P344, P347, P359, P365, P371, P383, P386, P392, P404, P407, P416, P425, P434, P443, P455, P458, P470, P473, P479, P488, P500, P512, P524, P530, P533, P539, P542, P545, P551, P554, P563, P566, P575, P581, P590, P599, P602, P608, P620, P635, P644, P650, P656, P659, P661, P668, P671, P680, P686, P692, P701, P703, P713, P716, P722, P728, P737, P746, P749, P755, P770, P776, P785, P788, P797, P806, P812, P815, P821, P830, P839, P845, and P854 each carry 4-hydroxyproline. Residues 311–322 (PGLPGAAGARGN) are compositionally biased toward low complexity. Residues 355-380 (PAGSPGSNGAPGQRGEPGPQGHAGAQ) show a composition bias toward low complexity. The segment covering 390–399 (GSPGGKGEMG) has biased composition (gly residues). The span at 404–425 (PGAPGLMGARGPPGPAGANGAP) shows a compositional bias: low complexity. Residues 426–435 (GLRGGAGEPG) show a composition bias toward gly residues. A compositionally biased stretch (low complexity) spans 478–523 (LPGAAGERGAPGFRGPAGPNGIPGEKGPAGERGAPGPAGPRGAAGE). Residues 528–549 (GVPGGPGMRGMPGSPGGPGSDG) show a composition bias toward gly residues. Over residues 642–651 (GLPGTGGPPG) the composition is skewed to gly residues. Residues 669–678 (GAPGGKGDAG) show a composition bias toward gly residues. Residues 679–692 (APGERGPPGLAGAP) show a composition bias toward low complexity. Over residues 693–711 (GLRGGAGPPGPEGGKGAAG) the composition is skewed to gly residues. A compositionally biased stretch (gly residues) spans 729 to 738 (GERGGLGSPG). The span at 787–796 (LPGIAGPRGS) shows a compositional bias: low complexity. A compositionally biased stretch (basic and acidic residues) spans 823–835 (GKGERGAPGEKGE). Positions 836 to 850 (GGPPGVAGPPGGSGP) are enriched in gly residues. K860 carries the 5-hydroxylysine modification. Over residues 864-873 (GSPGGPGAAG) the composition is skewed to gly residues. 4-hydroxyproline occurs at positions 866, 869, 875, 881, 884, 890, 892, 899, 905, 914, 917, 929, 935, 941, and 944. A compositionally biased stretch (pro residues) spans 890-907 (PGPPGPSGSPGKDGPPGP). Positions 908–917 (AGNTGAPGSP) are enriched in low complexity. Positions 946–961 (PLGIAGITGARGLAGP) are enriched in low complexity. Residues P962, P965, and P971 each carry the 4-hydroxyproline modification. Residue K977 is modified to 5-hydroxylysine. P983, P995, P1001, P1010, P1016, P1022, P1028, P1040, P1043, P1046, P1049, P1052, P1076, and P1085 each carry 4-hydroxyproline. Positions 1046 to 1055 (PGHPGPPGPV) are enriched in pro residues. Residues 1067–1085 (SGPAGPAGAPGPAGSRGAP) are compositionally biased toward low complexity. K1106 bears the 5-hydroxylysine mark. Residues P1112, P1115, P1118, P1121, P1133, P1148, P1157, P1163, P1178, P1181, P1184, P1187, P1190, and P1193 each carry the 4-hydroxyproline modification. The span at 1123 to 1133 (PAGQQGAIGSP) shows a compositional bias: low complexity. Pro residues predominate over residues 1181–1193 (PGQPGPPGPPGAP). The nonhelical region (C-terminal) stretch occupies residues 1197-1205 (CGGVGAAAI). A propeptide spans 1222 to 1466 (DEPMDFKINT…GVDVGPVCFL (245 aa)) (C-terminal propeptide). The Fibrillar collagen NC1 domain occupies 1232–1466 (DEIMTSLKSV…GVDVGPVCFL (235 aa)). Intrachain disulfides connect C1262-C1294, C1302-C1464, and C1372-C1417. Ca(2+)-binding residues include D1280, N1282, Q1283, C1285, and D1288.

It belongs to the fibrillar collagen family. Trimers of identical alpha 1(III) chains. The chains are linked to each other by interchain disulfide bonds. Trimers are also cross-linked via hydroxylysines. Interacts with ADGRG1. Post-translationally, proline residues at the third position of the tripeptide repeating unit (G-X-Y) are hydroxylated in some or all of the chains. O-linked glycan consists of a Glc-Gal disaccharide bound to the oxygen atom of a post-translationally added hydroxyl group.

The protein resides in the secreted. It localises to the extracellular space. Its subcellular location is the extracellular matrix. In terms of biological role, collagen type III occurs in most soft connective tissues along with type I collagen. Involved in regulation of cortical development. Is the major ligand of ADGRG1 in the developing brain and binding to ADGRG1 inhibits neuronal migration and activates the RhoA pathway by coupling ADGRG1 to GNA13 and possibly GNA12. In Homo sapiens (Human), this protein is Collagen alpha-1(III) chain (COL3A1).